The chain runs to 512 residues: Cytochrome P450 monooxygenase FrzL (512 aa).

Residues Thr6–Tyr26 form a helical membrane-spanning segment. A heme-binding site is contributed by Cys423.

It belongs to the cytochrome P450 family. Heme serves as cofactor.

It is found in the membrane. Cytochrome P450 monooxygenase; part of the gene cluster that mediates the biosynthesis of the alkaloid (-)-FR901483, a potent immunosuppressant that shows efficacy in animal models and a probable inhibitor of purine nucleotide biosynthesis by targeting phosphoribosylpyrophosphate amidotransferase (PPAT). The only unassigned enzyme in the cluster is the second cytochrome P450 monooxygenase FrzL. The biosynthesis of (-)-FR901483 starts with the condensation of two L-tyrosines to yield (S,S)-dityrosyl-piperazine. This process occurs in 3 steps with the non-canonical nonribosomal peptide synthetase FrzA catalyzing the reduction of L-tyrosine into L-tyrosinal, the spontaneous condensation of 2 L-tyrosinal units, and the subsequent reduction by the NmrA-like family domain-containing oxidoreductase FrzB. The cytochrome P450 monooxygenase FrzC then performs coupling between N10 and C1' to morph the piperazine into a 1,4-diazabicyclo[3.2.1]octane spiro-fused to a 2,5-cyclohexadienone. The dienone portion is further reduced to cyclohexanone by the flavin-dependent reductase FrzD. The methyltranserases (MTs) FrzE and FrzF are then involved in the methylation at the C10' amine and the C4 phenolic oxygen, respectively. The order of the two MTs appear to be interchangeable. Cleavage of the C9-N10' bond by the dioxygenase FrzG then leads to formation of a conjugated iminium. In addition to the oxidation of C9, an additional dehydrogenation between C7 and C8 can occur to give a likely shunt product. The next biosynthetic step is the intramolecular aldol condensation catalyzed by the newly identified aldolase FrzH to yield an aza-tricyclic product with the formation of a C9-C3' bond. The short-chain dehydrogenase/reductase FrzI then produces dephospho-(-)-FR901483 that is phosphorylated at C4'-OH into (-)-FR901483 by the phosphotransferase FrzJ. This is Cytochrome P450 monooxygenase FrzL from Cladobotryum sp.